The primary structure comprises 248 residues: Granzyme-like protein 2 (248 aa).

Positions 1–18 (MFLFLIFLVAVLPVNTEG) are cleaved as a signal peptide. A propeptide spans 19–20 (GE) (activation peptide). In terms of domain architecture, Peptidase S1 spans 21-243 (IVWGTESKPH…FIPWIQKTMK (223 aa)). A disulfide bond links Cys50 and Cys66. Active-site charge relay system residues include His65 and Asp108. 2 cysteine pairs are disulfide-bonded: Cys142/Cys207 and Cys172/Cys186. N-linked (GlcNAc...) asparagine glycosylation is found at Asn152 and Asn180. The Charge relay system role is filled by Ser201.

Belongs to the peptidase S1 family. Granzyme subfamily. Duodenum, lung and spleen.

This enzyme is necessary for target cell lysis in cell-mediated immune responses. The protein is Granzyme-like protein 2 of Rattus norvegicus (Rat).